The following is a 223-amino-acid chain: Endonuclease V (223 aa).

Residues Asp-35 and Asp-103 each contribute to the Mg(2+) site.

This sequence belongs to the endonuclease V family. The cofactor is Mg(2+).

Its subcellular location is the cytoplasm. The enzyme catalyses Endonucleolytic cleavage at apurinic or apyrimidinic sites to products with a 5'-phosphate.. Functionally, DNA repair enzyme involved in the repair of deaminated bases. Selectively cleaves double-stranded DNA at the second phosphodiester bond 3' to a deoxyinosine leaving behind the intact lesion on the nicked DNA. The sequence is that of Endonuclease V from Escherichia coli O45:K1 (strain S88 / ExPEC).